The chain runs to 54 residues: Large ribosomal subunit protein bL33B (54 aa).

It belongs to the bacterial ribosomal protein bL33 family.

This Mycobacterium sp. (strain KMS) protein is Large ribosomal subunit protein bL33B.